The following is a 203-amino-acid chain: RNA chaperone ProQ (203 aa).

Residues 111–138 form a disordered region; the sequence is KAKRQALAPKKPAKKVAPKRAPAVKKER.

The protein belongs to the ProQ family.

It localises to the cytoplasm. In terms of biological role, RNA chaperone with significant RNA binding, RNA strand exchange and RNA duplexing activities. The polypeptide is RNA chaperone ProQ (Shewanella frigidimarina (strain NCIMB 400)).